We begin with the raw amino-acid sequence, 205 residues long: Recombination protein RecR (205 aa).

The C4-type zinc finger occupies 64 to 79 (CSRCYFITQGDLCAIC). The region spanning 87-182 (RVICVVEEPL…RVTRLARGLP (96 aa)) is the Toprim domain.

The protein belongs to the RecR family.

In terms of biological role, may play a role in DNA repair. It seems to be involved in an RecBC-independent recombinational process of DNA repair. It may act with RecF and RecO. The chain is Recombination protein RecR from Roseiflexus sp. (strain RS-1).